Consider the following 186-residue polypeptide: Ribosome-recycling factor (186 aa).

This sequence belongs to the RRF family.

The protein resides in the cytoplasm. Its function is as follows. Responsible for the release of ribosomes from messenger RNA at the termination of protein biosynthesis. May increase the efficiency of translation by recycling ribosomes from one round of translation to another. The polypeptide is Ribosome-recycling factor (Amoebophilus asiaticus (strain 5a2)).